We begin with the raw amino-acid sequence, 141 residues long: MAKKVEKLVKLQIPAGKATPAPPVGPALGQAGINIMGFTKEFNARTADQAGMIIPVVISVYEDKSFDFITKTPPAAVLLKKAAGVEKGSGEPNKTKVATITRAQVQEIAETKMPDLNAANLESAMRMIEGTARSMGFTVTD.

Belongs to the universal ribosomal protein uL11 family. Part of the ribosomal stalk of the 50S ribosomal subunit. Interacts with L10 and the large rRNA to form the base of the stalk. L10 forms an elongated spine to which L12 dimers bind in a sequential fashion forming a multimeric L10(L12)X complex. In terms of processing, one or more lysine residues are methylated.

Its function is as follows. Forms part of the ribosomal stalk which helps the ribosome interact with GTP-bound translation factors. The protein is Large ribosomal subunit protein uL11 of Streptococcus agalactiae serotype Ia (strain ATCC 27591 / A909 / CDC SS700).